We begin with the raw amino-acid sequence, 365 residues long: Probable caffeine synthase 4 (365 aa).

S-adenosyl-L-homocysteine is bound at residue Y18. Position 25 (T25) interacts with caffeine. Residues C61, N66, D98, L99, S134, and F135 each coordinate S-adenosyl-L-homocysteine. Residues Y152, H155, and W156 each contribute to the caffeine site. The Mg(2+) site is built by N173, D259, F261, and N262. Position 317 (F317) interacts with caffeine.

It belongs to the methyltransferase superfamily. Type-7 methyltransferase family. It depends on Mg(2+) as a cofactor.

It functions in the pathway alkaloid biosynthesis. May be involved in the biosynthesis of caffeine. The polypeptide is Probable caffeine synthase 4 (Camellia sinensis (Tea plant)).